The primary structure comprises 152 residues: Protein Smg homolog (152 aa).

It belongs to the Smg family.

The protein is Protein Smg homolog of Bordetella petrii (strain ATCC BAA-461 / DSM 12804 / CCUG 43448).